Consider the following 96-residue polypeptide: 2Fe-2S ferredoxin-5 (96 aa).

Positions 2 to 96 (PKVIVANINA…GKGDVVIYLP (95 aa)) constitute a 2Fe-2S ferredoxin-type domain. 4 residues coordinate [2Fe-2S] cluster: Cys36, Cys42, Cys45, and Cys81.

This sequence belongs to the adrenodoxin/putidaredoxin family. The cofactor is [2Fe-2S] cluster.

Its function is as follows. May be involved in the assembly of iron-sulfur clusters (Isc-Fd). The polypeptide is 2Fe-2S ferredoxin-5 (fdx5) (Aquifex aeolicus (strain VF5)).